Reading from the N-terminus, the 211-residue chain is Ribonuclease T (211 aa).

In terms of domain architecture, Exonuclease spans 24–198 (VVVDVETGGF…YDAEKTAHLF (175 aa)). Asp-27, Glu-29, His-185, and Asp-190 together coordinate Mg(2+). The active-site Proton donor/acceptor is the His-185.

The protein belongs to the RNase T family. Homodimer. Mg(2+) is required as a cofactor.

Trims short 3' overhangs of a variety of RNA species, leaving a one or two nucleotide 3' overhang. Responsible for the end-turnover of tRNA: specifically removes the terminal AMP residue from uncharged tRNA (tRNA-C-C-A). Also appears to be involved in tRNA biosynthesis. In Xylella fastidiosa (strain 9a5c), this protein is Ribonuclease T.